Here is a 239-residue protein sequence, read N- to C-terminus: Small ribosomal subunit protein uS2 (239 aa).

Belongs to the universal ribosomal protein uS2 family.

This Francisella tularensis subsp. tularensis (strain WY96-3418) protein is Small ribosomal subunit protein uS2.